We begin with the raw amino-acid sequence, 309 residues long: Probable lipid kinase YegS-like (309 aa).

The 134-residue stretch at 1–134 (MAPSHWRLIL…VDLLRIDAEH (134 aa)) folds into the DAGKc domain. Residues T39, 65 to 71 (GDGTLSE), and T96 contribute to the ATP site. Positions 219, 222, and 224 each coordinate Mg(2+). E280 functions as the Proton acceptor in the catalytic mechanism.

Belongs to the diacylglycerol/lipid kinase family. YegS lipid kinase subfamily. Mg(2+) is required as a cofactor. The cofactor is Ca(2+).

It is found in the cytoplasm. In terms of biological role, probably phosphorylates lipids; the in vivo substrate is unknown. The protein is Probable lipid kinase YegS-like of Xanthomonas oryzae pv. oryzae (strain MAFF 311018).